The following is a 358-amino-acid chain: MGAPPKTAQNLSFVLEGIHKVKFEDRPIPQLRDAHDVLVDVRFTGICGSDVHYWEHGSIGQFVVKDPMVLGHESSGVISKVGSAVTTLKVGDHVAMEPGIPCRRCEPCKEGKYNLCEKMAFAATPPYDGTLAKYYVLPEDFCYKLPENINLQEAAVMEPLSVAVHIVKQANVAPGQSVVVFGAGPVGLLCCAVARAFGSPKVIAVDIQKGRLEFAKKYAATAIFEPSKVSALENAERIVNENDLGRGADIVIDASGAEPSVHTGIHVLRPGGTYVQGGMGRNEITFPIMAACTKELNVRGSFRYGSGDYKLAVNLVASGKVSVKELITGVVSFEDAEQAFHEVKAGKGIKTLIAGVDV.

The Zn(2+) site is built by C47, H72, and E73. 182–187 contacts NAD(+); the sequence is GAGPVG.

It belongs to the zinc-containing alcohol dehydrogenase family. Zn(2+) serves as cofactor.

The enzyme catalyses xylitol + NAD(+) = D-xylulose + NADH + H(+). The protein operates within carbohydrate degradation; L-arabinose degradation via L-arabinitol; D-xylulose 5-phosphate from L-arabinose (fungal route): step 4/5. Its function is as follows. Xylitol dehydrogenase which catalyzes the conversion of xylitol to D-xylulose. Xylose is a major component of hemicelluloses such as xylan. Most fungi utilize D-xylose via three enzymatic reactions, xylose reductase (XR), xylitol dehydrogenase (XDH), and xylulokinase, to form xylulose 5-phosphate, which enters pentose phosphate pathway. The protein is D-xylulose reductase A (xdhA) of Aspergillus oryzae (strain ATCC 42149 / RIB 40) (Yellow koji mold).